We begin with the raw amino-acid sequence, 594 residues long: Chitooligosaccharidolytic beta-N-acetylglucosaminidase (594 aa).

A signal peptide spans 1 to 22 (MWSRRIPLFIFGVLVLILSVAA). 2 disulfide bridges follow: cysteine 31–cysteine 59 and cysteine 36–cysteine 55. Asparagine 164 carries an N-linked (GlcNAc...) asparagine glycan. Residues aspartate 249 and histidine 303 each act as charge relay system in the active site. Cystine bridges form between cysteine 316-cysteine 373 and cysteine 326-cysteine 331. The active-site Charge relay system is the glutamate 368. An N-linked (GlcNAc...) asparagine glycan is attached at asparagine 375. Intrachain disulfides connect cysteine 478-cysteine 491 and cysteine 585-cysteine 592.

It belongs to the glycosyl hydrolase 20 family. As to quaternary structure, homodimer.

The catalysed reaction is Hydrolysis of terminal non-reducing N-acetyl-D-hexosamine residues in N-acetyl-beta-D-hexosaminides.. Its activity is regulated as follows. Inhibited by O-(2-acetamido-2-deoxy-D-glucopyransylidene)-amino-N-phenylcarbamate (PUGNAc). Inhibited by thiabendazole (TMG)-chitotriomycin. Inhibited by 6-(dimethylamino)-2-(2-(((5-methyl-1,3,4-thiadiazol-2-yl)methyl)amino)ethyl)- 1H-benzo[de]isoquinoline-1,3(2H)-dione (Q2), a synthesized non-carbohydrate unsymmetrical dyad of naphthalimide and thiadiazole having a dimethylamino group at C4 of the naphthalimide. Inhibited poorly by N-acetyl-glucosamine (NAG)-thiazoline (NGT), but when the thiazoline ring of NGT is replaced by a bulky substituent such as in compound 1,2-dideoxy-2'-methylamino-alpha-D-glucopyranoso-[2,1-d]-Delta2'-thiazoline (NMAGT), the inhibition constant Ki is lowered 600-fold compared to that of NGT. Inhibited by berberine, berberine analogs thalifendine and palmatine, and berberine derivative SYSU-1, but not by berberine analog tetrahydroberberine. Its function is as follows. Hydrolyzes one beta-GlcNAc unit at a time from the non-reducing ends of substrates, with a preference for shorter substrates. The 2-acetamido group and the beta-glycoside bond linkage in the substrate are required for its activity. Active with p-nitrophenyl (pNP)-beta-GlcNAc, pNP-beta-GalNAc and chitooligosaccharides (degree of polymerization from 2 to 6), but not with the complex N-glycan substrate (GlcNAcbeta-1,2Manalpha-1,6)(GlcNAcbeta-1,2Manalpha-1,3)Manbeta-1,4GlcNAcbeta-1,4GlcNAc-PA (GnGn-PA), pNP-alpha-GlcNAc or with the long polymer colloidal chitin. Involved in chitin catabolism. Involved in the degradation of old cuticle during the pupation stage. The protein is Chitooligosaccharidolytic beta-N-acetylglucosaminidase of Ostrinia furnacalis (Asian corn borer).